A 77-amino-acid polypeptide reads, in one-letter code: Large ribosomal subunit protein bL28 (77 aa).

Belongs to the bacterial ribosomal protein bL28 family.

The polypeptide is Large ribosomal subunit protein bL28 (Dechloromonas aromatica (strain RCB)).